The sequence spans 711 residues: Toxin RTX-III translocation ATP-binding protein (711 aa).

The Peptidase C39 domain occupies 1–129; it reads MESQMPFNEK…EIFQGGMILI (129 aa). H87 is an active-site residue. The region spanning 158 to 440 is the ABC transmembrane type-1 domain; sequence FVETIIVSIF…LAQLWQDFQQ (283 aa). 5 consecutive transmembrane segments (helical) span residues 162–182, 195–215, 273–293, 299–319, and 392–412; these read IIVS…FQVV, LNVI…LSGL, ALTS…MWYY, IVIL…SPIL, and VMII…LSIG. The ABC transporter domain maps to 472–707; the sequence is IAFKHIRFRY…ENGLYYYLNQ (236 aa). ATP is bound at residue 506 to 513; the sequence is GRSGSGKS.

It belongs to the ABC transporter superfamily. Protein-1 exporter (TC 3.A.1.109) family. As to quaternary structure, homodimer.

The protein resides in the cell membrane. Involved in the transport of the toxin RTX-III. The sequence is that of Toxin RTX-III translocation ATP-binding protein (apxIIIB) from Actinobacillus pleuropneumoniae (Haemophilus pleuropneumoniae).